Reading from the N-terminus, the 71-residue chain is Phosphatidylinositol N-acetylglucosaminyltransferase subunit Y (71 aa).

Residue methionine 1 is a topological domain, cytoplasmic. Residues 2-21 form a helical membrane-spanning segment; it reads FFSLPVLTVLIPLVSLTGLL. The Lumenal segment spans residues 22-44; the sequence is YSASVEEDFPNGCTSTASLCFYS. Residues 45–65 form a helical membrane-spanning segment; it reads LLLPITLPVYVFFHLWTWMGL. Over 66 to 71 the chain is Cytoplasmic; the sequence is KLFRHN.

Component of the glycosylphosphatidylinositol-N-acetylglucosaminyltransferase (GPI-GnT) complex composed at least by PIGA, PIGC, PIGH, PIGP, PIGQ, PIGY and DPM2.

The protein localises to the endoplasmic reticulum membrane. It functions in the pathway glycolipid biosynthesis; glycosylphosphatidylinositol-anchor biosynthesis. Part of the glycosylphosphatidylinositol-N-acetylglucosaminyltransferase (GPI-GnT) complex that catalyzes the transfer of N-acetylglucosamine from UDP-N-acetylglucosamine to phosphatidylinositol and participates in the first step of GPI biosynthesis. May act by regulating the catalytic subunit PIGA. The sequence is that of Phosphatidylinositol N-acetylglucosaminyltransferase subunit Y from Xenopus tropicalis (Western clawed frog).